Here is a 188-residue protein sequence, read N- to C-terminus: Protease-associated domain-containing protein 1 (188 aa).

The N-terminal stretch at 1–21 (MVPGAAGWCCLVLWLPACVAA) is a signal peptide. The PA domain occupies 83 to 163 (IQDQIALVER…RSLEQHGLPW (81 aa)). N-linked (GlcNAc...) asparagine glycosylation is present at Asn-171.

N-glycosylated; required for efficient secretion. As to expression, highly expressed in skeletal muscle, heart and liver. Expressed at intermediate level in kidney.

It is found in the secreted. In terms of biological role, plays a role in the modulation of physical activity and adiposity. This Homo sapiens (Human) protein is Protease-associated domain-containing protein 1.